We begin with the raw amino-acid sequence, 353 residues long: MKMSFRWYGESDPVSLQYIRQIPGVTHIVSAIYDEPVGEVWPAHKIEALKATIERAGLQFDVVESVPVHEDIKLGKPGRDRLIDHYRQTIRHLGAAGIRVVCYNFMPVFDWTRTELSKTLDDGSTCLAFSTDAVDRIDPNDGIALPGWDSSYRPEQLQALLADYRDVDENALWANLEYFLKAIIPVAEEAGVKMAIHPDDPPRPIFGLPRIVKNRDDLARIVRLVDSPANGLTLCSGSLGAGPENDVEALVREFGAMGRIHFAHIRNVKVDANGDFEETAHLSSCGSLDIAAIVKAYHDTGFTGYVRPDHGRMIWGETGKPGYGLYDRALGAVYLNGLWEALAKFDRAPQASQ.

Belongs to the mannonate dehydratase family. Fe(2+) serves as cofactor. Requires Mn(2+) as cofactor.

The catalysed reaction is D-mannonate = 2-dehydro-3-deoxy-D-gluconate + H2O. Its pathway is carbohydrate metabolism; pentose and glucuronate interconversion. Its function is as follows. Catalyzes the dehydration of D-mannonate. This Burkholderia cenocepacia (strain ATCC BAA-245 / DSM 16553 / LMG 16656 / NCTC 13227 / J2315 / CF5610) (Burkholderia cepacia (strain J2315)) protein is Mannonate dehydratase.